Reading from the N-terminus, the 457-residue chain is tRNA-2-methylthio-N(6)-dimethylallyladenosine synthase (457 aa).

Residues 3–120 enclose the MTTase N-terminal domain; it reads KKVYVKTFGC…LPQMIDKRRE (118 aa). Residues Cys-12, Cys-49, Cys-83, Cys-157, Cys-161, and Cys-164 each coordinate [4Fe-4S] cluster. Residues 143–377 form the Radical SAM core domain; the sequence is RVDGPSAFVS…QATIEENVQR (235 aa). The region spanning 380-447 is the TRAM domain; it reads DSMVGKIERI…PHSLRGELVL (68 aa).

Belongs to the methylthiotransferase family. MiaB subfamily. In terms of assembly, monomer. Requires [4Fe-4S] cluster as cofactor.

The protein localises to the cytoplasm. It carries out the reaction N(6)-dimethylallyladenosine(37) in tRNA + (sulfur carrier)-SH + AH2 + 2 S-adenosyl-L-methionine = 2-methylsulfanyl-N(6)-dimethylallyladenosine(37) in tRNA + (sulfur carrier)-H + 5'-deoxyadenosine + L-methionine + A + S-adenosyl-L-homocysteine + 2 H(+). Functionally, catalyzes the methylthiolation of N6-(dimethylallyl)adenosine (i(6)A), leading to the formation of 2-methylthio-N6-(dimethylallyl)adenosine (ms(2)i(6)A) at position 37 in tRNAs that read codons beginning with uridine. This Paraburkholderia phytofirmans (strain DSM 17436 / LMG 22146 / PsJN) (Burkholderia phytofirmans) protein is tRNA-2-methylthio-N(6)-dimethylallyladenosine synthase.